The primary structure comprises 260 residues: Apolipoprotein A-I (260 aa).

Positions 1–18 (MKFAALALALLLAVGSHA) are cleaved as a signal peptide. The segment at 32 to 63 (ARAVLDVYLTQVKDMSLRAVNQLDDPQYAEFK) is 3 X approximate tandem repeats. Repeat copies occupy residues 64–85 (TNLAQRIEEMYTQIKTLQGSVS) and 87–107 (MTDSFYNTVMEVTKDTRESLN). The tract at residues 64–260 (TNLAQRIEEM…EIIAASVTKS (197 aa)) is 10 X approximate tandem repeats. The 3; half-length repeat unit spans residues 108–118 (VDLEALKSSLA). A run of 5 repeats spans residues 119-140 (PQNEQLKQVIEKHLNDYRTLLT), 141-162 (PIYNDYKTKHDEEMAALKTRLE), 163-184 (PVMEELRTKIQANVEETKAVLM), 185-206 (PMVETVRTKVTERLESLREVVQ), and 207-225 (PYVQEYKEQMKQMYDQAQT). A 9; half-length repeat occupies 226-236 (VDTDALRTKIT). Copy 10 of the repeat occupies 237 to 260 (PLVEEIKVKMNAIFEIIAASVTKS).

This sequence belongs to the apolipoprotein A1/A4/E family. Strong expression in liver with lower expression in intestine.

Its subcellular location is the secreted. Participates in the reverse transport of cholesterol from tissues to the liver for excretion by promoting cholesterol efflux from tissues and by acting as a cofactor for the lecithin cholesterol acyltransferase (LCAT). This chain is Apolipoprotein A-I (apoa1), found in Sparus aurata (Gilthead sea bream).